Consider the following 75-residue polypeptide: Small ribosomal subunit protein bS18 (75 aa).

Belongs to the bacterial ribosomal protein bS18 family. In terms of assembly, part of the 30S ribosomal subunit. Forms a tight heterodimer with protein bS6.

Its function is as follows. Binds as a heterodimer with protein bS6 to the central domain of the 16S rRNA, where it helps stabilize the platform of the 30S subunit. The polypeptide is Small ribosomal subunit protein bS18 (Teredinibacter turnerae (strain ATCC 39867 / T7901)).